The primary structure comprises 372 residues: Cytochrome b (372 aa).

4 helical membrane passes run 25 to 45 (FGSMLLACLMLQIMTGFFLAI), 69 to 90 (WIMQNLHTISASLFFICIYTHI), 105 to 125 (WLSGTALLVTLMATAFFGYVL), and 170 to 190 (FFALHFILPFIIISLSSVHII). Heme b-binding residues include His-75 and His-89. Heme b-binding residues include His-174 and His-188. His-193 is a binding site for a ubiquinone. A run of 4 helical transmembrane segments spans residues 218–238 (YKDMLMITSMITLLLLILSFS), 280–300 (LGGTLALLLSVMILTTTPFTH), 312–332 (LSQILFWTLIATFITITWTAS), and 339–358 (FITISQTTSIFYFSFFILTP).

The protein belongs to the cytochrome b family. In terms of assembly, the cytochrome bc1 complex contains 3 respiratory subunits (MT-CYB, CYC1 and UQCRFS1), 2 core proteins (UQCRC1 and UQCRC2) and probably 6 low-molecular weight proteins. Heme b is required as a cofactor.

It is found in the mitochondrion inner membrane. Component of the ubiquinol-cytochrome c reductase complex (complex III or cytochrome b-c1 complex) that is part of the mitochondrial respiratory chain. The b-c1 complex mediates electron transfer from ubiquinol to cytochrome c. Contributes to the generation of a proton gradient across the mitochondrial membrane that is then used for ATP synthesis. This Naja kaouthia (Monocled cobra) protein is Cytochrome b (MT-CYB).